The primary structure comprises 101 residues: CYC02 protein (101 aa).

Residues 42-64 (DAVCHHGCCRWFHHRCVRCCRSA) form a 1; approximate repeat. Residues 42–101 (DAVCHHGCCRWFHHRCVRCCRSAEEVSVSDTENNAAADAHCRHGCCRWFHGRCIRCCPSA) form a 2 X approximate repeats region. Residues 79–101 (DAHCRHGCCRWFHGRCIRCCPSA) form a 2; approximate repeat.

This sequence belongs to the GRP family.

May be involved in the control of the cell cycle at the G1/S start transition. This chain is CYC02 protein (CYC02), found in Catharanthus roseus (Madagascar periwinkle).